Consider the following 532-residue polypeptide: Phosphoenolpyruvate carboxykinase (ATP) (532 aa).

Substrate contacts are provided by R60, Y194, and K200. ATP-binding positions include K200, H219, and 237-245 (GLSGTGKTT). Residues K200 and H219 each contribute to the Mn(2+) site. Position 258 (D258) interacts with Mn(2+). Residues E286, R324, and T449 each contribute to the ATP site. R324 is a binding site for substrate.

It belongs to the phosphoenolpyruvate carboxykinase (ATP) family. Mn(2+) serves as cofactor.

The protein resides in the cytoplasm. It carries out the reaction oxaloacetate + ATP = phosphoenolpyruvate + ADP + CO2. It functions in the pathway carbohydrate biosynthesis; gluconeogenesis. Functionally, involved in the gluconeogenesis. Catalyzes the conversion of oxaloacetate (OAA) to phosphoenolpyruvate (PEP) through direct phosphoryl transfer between the nucleoside triphosphate and OAA. This is Phosphoenolpyruvate carboxykinase (ATP) from Paracoccus denitrificans (strain Pd 1222).